The sequence spans 205 residues: Isochorismatase domain-containing protein 2 (205 aa).

The protein belongs to the isochorismatase family.

This Xenopus laevis (African clawed frog) protein is Isochorismatase domain-containing protein 2 (isoc2).